The sequence spans 140 residues: Putative pre-16S rRNA nuclease (140 aa).

This sequence belongs to the YqgF nuclease family.

The protein localises to the cytoplasm. In terms of biological role, could be a nuclease involved in processing of the 5'-end of pre-16S rRNA. In Vibrio cholerae serotype O1 (strain ATCC 39541 / Classical Ogawa 395 / O395), this protein is Putative pre-16S rRNA nuclease.